Consider the following 637-residue polypeptide: ATP-dependent RNA helicase DBP6 (637 aa).

Residues 1–93 form a disordered region; it reads MFAVRFDPSQ…AASDHPDKHN (93 aa). Acidic residues predominate over residues 33–84; it reads DEEDESSEEETESSEDEEEKEKEEVADEDSMDVDDESSGDDDEEAEEGEVDA. Positions 198 to 206 match the Q motif motif; sequence TFPIQSILL. The region spanning 222–402 is the Helicase ATP-binding domain; it reads KNFTRRVGDV…GLQFYNPKLF (181 aa). 235–242 provides a ligand contact to ATP; that stretch reads ASTGSGKT. The short motif at 342-345 is the DEAD box element; that stretch reads DEAD. Positions 434–608 constitute a Helicase C-terminal domain; the sequence is FLLRLLSEIN…EGQEEEAQVL (175 aa).

The protein belongs to the DEAD box helicase family. DDX51/DBP6 subfamily. Associated with pre-ribosomal particles.

It is found in the nucleus. The protein resides in the nucleolus. The catalysed reaction is ATP + H2O = ADP + phosphate + H(+). In terms of biological role, ATP-binding RNA helicase involved in the biogenesis of 60S ribosomal subunits and is required for the normal formation of 25S and 5.8S rRNAs. In Vanderwaltozyma polyspora (strain ATCC 22028 / DSM 70294 / BCRC 21397 / CBS 2163 / NBRC 10782 / NRRL Y-8283 / UCD 57-17) (Kluyveromyces polysporus), this protein is ATP-dependent RNA helicase DBP6 (DBP6).